A 282-amino-acid polypeptide reads, in one-letter code: MKIINTVQEMQQITNELRASGKSIGFVPTMGYLHEGHATLLRKAREENEIVVLSVFVNPLQFGPNEDLDRYPRDIDRDENVAKENSVDYLFYPSVEEMYPAEQTTTVEVVKRTDVLCGKQRPGHFAGVAIVLMKLFNITLPTRAYFGMKDAQQVAVIEGFVADFNIPVTIVPVDIVREEDGLAKSSRNVYLSPEEREEALHLYRSLCIAKERIETGERNAEIITTLVKEYIETYTKGTVDYADLYAYPSLQVVDKIEGRIILAIAVKFDNVRLIDNITLTVK.

Residue methionine 30–histidine 37 coordinates ATP. The active-site Proton donor is the histidine 37. Residue glutamine 61 participates in (R)-pantoate binding. Glutamine 61 provides a ligand contact to beta-alanine. ATP is bound at residue glycine 147 to aspartate 150. Residue glutamine 153 coordinates (R)-pantoate. ATP is bound by residues valine 176 and lysine 184–arginine 187.

This sequence belongs to the pantothenate synthetase family. As to quaternary structure, homodimer.

The protein resides in the cytoplasm. It carries out the reaction (R)-pantoate + beta-alanine + ATP = (R)-pantothenate + AMP + diphosphate + H(+). Its pathway is cofactor biosynthesis; (R)-pantothenate biosynthesis; (R)-pantothenate from (R)-pantoate and beta-alanine: step 1/1. Functionally, catalyzes the condensation of pantoate with beta-alanine in an ATP-dependent reaction via a pantoyl-adenylate intermediate. This is Pantothenate synthetase from Bacillus cereus (strain AH187).